We begin with the raw amino-acid sequence, 399 residues long: Elongation factor Tu 2 (399 aa).

A tr-type G domain is found at 10-209 (KPHVNIGTIG…QVDGYIPEPE (200 aa)). A G1 region spans residues 19–26 (GHVDHGKT). GTP is bound at residue 19–26 (GHVDHGKT). Thr-26 provides a ligand contact to Mg(2+). Positions 60-64 (GITIA) are G2. A G3 region spans residues 81-84 (DCPG). Residues 81–85 (DCPGH) and 136–139 (NKAD) each bind GTP. Residues 136 to 139 (NKAD) form a G4 region. Residues 174–176 (SAL) are G5.

The protein belongs to the TRAFAC class translation factor GTPase superfamily. Classic translation factor GTPase family. EF-Tu/EF-1A subfamily. As to quaternary structure, monomer.

Its subcellular location is the cytoplasm. The enzyme catalyses GTP + H2O = GDP + phosphate + H(+). Functionally, GTP hydrolase that promotes the GTP-dependent binding of aminoacyl-tRNA to the A-site of ribosomes during protein biosynthesis. This Syntrophotalea carbinolica (strain DSM 2380 / NBRC 103641 / GraBd1) (Pelobacter carbinolicus) protein is Elongation factor Tu 2.